Consider the following 221-residue polypeptide: Protein-L-isoaspartate O-methyltransferase (221 aa).

Residue serine 64 is part of the active site.

The protein belongs to the methyltransferase superfamily. L-isoaspartyl/D-aspartyl protein methyltransferase family.

The protein resides in the cytoplasm. The catalysed reaction is [protein]-L-isoaspartate + S-adenosyl-L-methionine = [protein]-L-isoaspartate alpha-methyl ester + S-adenosyl-L-homocysteine. Functionally, catalyzes the methyl esterification of L-isoaspartyl residues in peptides and proteins that result from spontaneous decomposition of normal L-aspartyl and L-asparaginyl residues. It plays a role in the repair and/or degradation of damaged proteins. In Thermococcus sibiricus (strain DSM 12597 / MM 739), this protein is Protein-L-isoaspartate O-methyltransferase.